A 372-amino-acid chain; its full sequence is Glutamate 5-kinase (372 aa).

Lys14 is an ATP binding site. Substrate contacts are provided by Ser54, Asp141, and Asn153. 173 to 174 (TD) contacts ATP. The PUA domain maps to 280–358 (RGTLVLDDGA…DAIEALLGYV (79 aa)).

The protein belongs to the glutamate 5-kinase family.

The protein localises to the cytoplasm. The enzyme catalyses L-glutamate + ATP = L-glutamyl 5-phosphate + ADP. The protein operates within amino-acid biosynthesis; L-proline biosynthesis; L-glutamate 5-semialdehyde from L-glutamate: step 1/2. Its function is as follows. Catalyzes the transfer of a phosphate group to glutamate to form L-glutamate 5-phosphate. In Pseudomonas aeruginosa (strain UCBPP-PA14), this protein is Glutamate 5-kinase.